Consider the following 578-residue polypeptide: CTP synthase (578 aa).

The Glutamine amidotransferase type-1 domain occupies 305 to 559 (KIALVGKYTN…LGLVAASSGI (255 aa)). Catalysis depends on for GATase activity residues cysteine 404, histidine 535, and glutamate 537.

The protein belongs to the CTP synthase family.

The catalysed reaction is UTP + L-glutamine + ATP + H2O = CTP + L-glutamate + ADP + phosphate + 2 H(+). It participates in pyrimidine metabolism; CTP biosynthesis via de novo pathway; CTP from UDP: step 2/2. Functionally, catalyzes the ATP-dependent amination of UTP to CTP with either L-glutamine or ammonia as the source of nitrogen. The protein is CTP synthase (URA7) of Candida glabrata (strain ATCC 2001 / BCRC 20586 / JCM 3761 / NBRC 0622 / NRRL Y-65 / CBS 138) (Yeast).